A 315-amino-acid polypeptide reads, in one-letter code: Putative purine nucleoside phosphorylase (315 aa).

Phosphate-binding positions include Ser49, His81, 103 to 105 (RYH), and Ala135. Glu220 is a binding site for a purine D-ribonucleoside. Phosphate is bound at residue Ser239. An a purine D-ribonucleoside-binding site is contributed by Asn262.

The protein belongs to the PNP/MTAP phosphorylase family.

Its subcellular location is the cytoplasm. The protein localises to the nucleus. It catalyses the reaction a purine D-ribonucleoside + phosphate = a purine nucleobase + alpha-D-ribose 1-phosphate. It functions in the pathway purine metabolism; purine nucleoside salvage. Its function is as follows. The purine nucleoside phosphorylases catalyze the phosphorolytic breakdown of the N-glycosidic bond in the beta-(deoxy)ribonucleoside molecules, with the formation of the corresponding free purine bases and pentose-1-phosphate. Cleaves guanosine and inosine. The polypeptide is Putative purine nucleoside phosphorylase (Schizosaccharomyces pombe (strain 972 / ATCC 24843) (Fission yeast)).